The following is a 349-amino-acid chain: Neutral protease 2 homolog ACLA_052720 (349 aa).

The N-terminal stretch at 1 to 19 (MQLTVLASAILALAQGALA) is a signal peptide. Positions 20-172 (IPAKAPALDV…PAAINLLDRR (153 aa)) are excised as a propeptide. Cystine bridges form between Cys-178/Cys-250 and Cys-257/Cys-275. His-300 contributes to the Zn(2+) binding site. Glu-301 is a catalytic residue. Positions 304 and 315 each coordinate Zn(2+).

It belongs to the peptidase M35 family. It depends on Zn(2+) as a cofactor.

It is found in the secreted. The enzyme catalyses Preferential cleavage of bonds with hydrophobic residues in P1'. Also 3-Asn-|-Gln-4 and 8-Gly-|-Ser-9 bonds in insulin B chain.. Functionally, secreted metalloproteinase that allows assimilation of proteinaceous substrates. Shows high activities on basic nuclear substrates such as histone and protamine. This chain is Neutral protease 2 homolog ACLA_052720, found in Aspergillus clavatus (strain ATCC 1007 / CBS 513.65 / DSM 816 / NCTC 3887 / NRRL 1 / QM 1276 / 107).